Here is a 159-residue protein sequence, read N- to C-terminus: Protein HydD (159 aa).

It belongs to the peptidase A31 family.

This is Protein HydD (hydD) from Wolinella succinogenes (strain ATCC 29543 / DSM 1740 / CCUG 13145 / JCM 31913 / LMG 7466 / NCTC 11488 / FDC 602W) (Vibrio succinogenes).